Here is an 81-residue protein sequence, read N- to C-terminus: CLAVATA3/ESR (CLE)-related protein 5 (81 aa).

The first 26 residues, 1–26 (MATLILKQTLIILLIIFSLQTLSSQA), serve as a signal peptide directing secretion. Hydroxyproline occurs at positions 73 and 76. P76 carries an O-linked (Ara...) hydroxyproline glycan.

Belongs to the CLV3/ESR signal peptide family. The O-glycosylation (arabinosylation) of the hydroxyproline Pro-76 enhances binding affinity of the CLE5p peptide for its receptor. Mostly expressed in roots, and, to a lower extent, in seedlings, stems, apex, flowers and siliques.

It is found in the secreted. Its subcellular location is the extracellular space. Extracellular signal peptide that regulates cell fate. This is CLAVATA3/ESR (CLE)-related protein 5 from Arabidopsis thaliana (Mouse-ear cress).